We begin with the raw amino-acid sequence, 888 residues long: Protein translocase subunit SecA (888 aa).

ATP-binding positions include glutamine 81, glycine 99–threonine 103, and aspartate 489.

This sequence belongs to the SecA family.

It is found in the plastid. The protein localises to the chloroplast stroma. Its subcellular location is the chloroplast thylakoid membrane. It catalyses the reaction ATP + H2O + cellular proteinSide 1 = ADP + phosphate + cellular proteinSide 2.. Functionally, has a central role in coupling the hydrolysis of ATP to the transfer of proteins across the thylakoid membrane. This is Protein translocase subunit SecA from Trieres chinensis (Marine centric diatom).